We begin with the raw amino-acid sequence, 241 residues long: Superoxide dismutase [Mn] 2, mitochondrial (241 aa).

Mn(2+)-binding residues include His60, His108, Asp197, and His201.

The protein belongs to the iron/manganese superoxide dismutase family. Homotetramer. Mn(2+) serves as cofactor.

The protein resides in the mitochondrion matrix. The catalysed reaction is 2 superoxide + 2 H(+) = H2O2 + O2. Its function is as follows. Destroys superoxide anion radicals which are normally produced within the cells and which are toxic to biological systems. The sequence is that of Superoxide dismutase [Mn] 2, mitochondrial (MSD2) from Arabidopsis thaliana (Mouse-ear cress).